A 708-amino-acid polypeptide reads, in one-letter code: MKDMPLQIHVLLGLAITTLVQAVDKKVDCPQLCTCEIRPWFTPTSIYMEASTVDCNDLGLLTFPARLPANTQILLLQTNDIAKIEYSTDFPVNLTGLDLSQNNLSSVTNINVKKMPQLLSVYLEENKLTELPEKCLSELSNLQELYINHNLLSTISPGAFIGLHNLLRLHLNSNRLQMINSKWFDALPNLEILMIGENPIIRIKDMNFKPLINLRSLVIAGINLTEIPDNALVGLENLESISFYDNRLIKVPHAALQKVVNLKFLDLNKNPINRIRRGDFSNMLHLKELGINNMPELISIDSLAVDNLPDLRKIEATNNPRLSYIHPNAFFRLPKLESLMLNSNALSALYHGTIESLPNLKEISIHSNPIRCDCVIRWINMNKTNIRFMEPDSLFCVDPPEFQGQNVRQVHFRDMMEICLPLIAPESFPSNLNVEAGSYVSFHCRATAEPQPEIYWITPSGQKLLPNTLTDKFYVHSEGTLDINGVTPKEGGLYTCIATNLVGADLKSVMIKVDGSFPQDNNGSLNIKIRDIQANSVLVSWKASSKILKSSVKWTAFVKTENSHAAQSARIPSDIKVYNLTHLNPSTEYKICIDIPTIYQKNRKKCVNVTTKGLDPDQKEYEKSNTTTLMACLGGLLGIIGVICLISCLSPEMNCDGGHSYVRNYLQKPTFALGELYPPLINLWEAGKEKSTSLKVKATVIGLPTNMS.

The N-terminal stretch at Met-1 to Ala-22 is a signal peptide. Residues Val-23–Ala-69 form the LRRNT domain. Over Val-23–Thr-628 the chain is Extracellular. LRR repeat units lie at residues Asn-70–Pro-91, Asn-93–Lys-114, Gln-117–Glu-138, Asn-141–Gly-162, Asn-165–Ala-186, Asn-189–Pro-210, Asn-213–Gly-234, Asn-237–Lys-258, Asn-261–Asn-282, His-285–Ala-304, Asp-310–Arg-332, and Lys-335–Pro-358. 2 N-linked (GlcNAc...) asparagine glycosylation sites follow: Asn-93 and Asn-103. The N-linked (GlcNAc...) asparagine glycan is linked to Asn-223. The region spanning Asn-368–Pro-421 is the LRRCT domain. N-linked (GlcNAc...) asparagine glycosylation is present at Asn-382. An Ig-like C2-type domain is found at Pro-421–Asp-514. A disulfide bridge connects residues Cys-444 and Cys-496. N-linked (GlcNAc...) asparagine glycans are attached at residues Asn-522, Asn-579, Asn-608, and Asn-625. The Fibronectin type-III domain occupies Gly-523–Asp-617. A helical transmembrane segment spans residues Leu-629–Leu-649. The Cytoplasmic segment spans residues Ser-650–Ser-708.

It is found in the membrane. In Pongo abelii (Sumatran orangutan), this protein is Leucine-rich repeat neuronal protein 3 (LRRN3).